Consider the following 242-residue polypeptide: MSAAPREDGRADDELRPITITRHWLDHAAGSVLVEFGRTRVLCAASAAEGVPRWRKGSGLGWVTAEYAMLPASTNTRSDRESVKGRIGGRTHEISRLIGRSLRAIIDYKALGENTIQLDCDVLQADGGTRTAAITGAYVALADAVEHLRSTGALTGEPLTGSVAAVSVGIIDGVPRLDLPYVEDVRAETDMNVVMTGSGKFVEVQGTAEGAAFDRAELDALLALAEKGCADLTRLQQEALSR.

Phosphate-binding positions include R90 and G128–R130.

The protein belongs to the RNase PH family. Homohexameric ring arranged as a trimer of dimers.

It catalyses the reaction tRNA(n+1) + phosphate = tRNA(n) + a ribonucleoside 5'-diphosphate. Functionally, phosphorolytic 3'-5' exoribonuclease that plays an important role in tRNA 3'-end maturation. Removes nucleotide residues following the 3'-CCA terminus of tRNAs; can also add nucleotides to the ends of RNA molecules by using nucleoside diphosphates as substrates, but this may not be physiologically important. Probably plays a role in initiation of 16S rRNA degradation (leading to ribosome degradation) during starvation. The chain is Ribonuclease PH from Nocardioides sp. (strain ATCC BAA-499 / JS614).